A 510-amino-acid polypeptide reads, in one-letter code: Protein fork head (510 aa).

Disordered regions lie at residues 1–62 (MQKL…SPLA) and 175–205 (AMPP…YRRS). Over residues 20–39 (SGGGGPPSGGGGGGGGGGGG) the composition is skewed to gly residues. A compositionally biased stretch (low complexity) spans 47 to 60 (NNPNPTSNGGSMSP). Serine 187 and serine 190 each carry phosphoserine. A DNA-binding region (fork-head) is located at residues 209–300 (AKPPYSYISL…GNMFENGCYL (92 aa)). Residues 309-359 (EKKEAIRQLHKSPSHSSLEATSPGKKDHEDSHHMHHHHHSRLDHHQHHKEA) form a disordered region. 3 positions are modified to phosphoserine: serine 320, serine 322, and serine 330. Positions 341–356 (HMHHHHHSRLDHHQHH) are enriched in basic residues.

The protein resides in the nucleus. In terms of biological role, fkh promotes terminal as opposed to segmental development. In the absence of fkh, this developmental switch does not occur. The nuclear localization of the fkh protein suggest that fkh regulates the transcription of other, subordinate, genes. This Drosophila melanogaster (Fruit fly) protein is Protein fork head (fkh).